The chain runs to 149 residues: SsrA-binding protein (149 aa).

This sequence belongs to the SmpB family.

The protein localises to the cytoplasm. In terms of biological role, required for rescue of stalled ribosomes mediated by trans-translation. Binds to transfer-messenger RNA (tmRNA), required for stable association of tmRNA with ribosomes. tmRNA and SmpB together mimic tRNA shape, replacing the anticodon stem-loop with SmpB. tmRNA is encoded by the ssrA gene; the 2 termini fold to resemble tRNA(Ala) and it encodes a 'tag peptide', a short internal open reading frame. During trans-translation Ala-aminoacylated tmRNA acts like a tRNA, entering the A-site of stalled ribosomes, displacing the stalled mRNA. The ribosome then switches to translate the ORF on the tmRNA; the nascent peptide is terminated with the 'tag peptide' encoded by the tmRNA and targeted for degradation. The ribosome is freed to recommence translation, which seems to be the essential function of trans-translation. The polypeptide is SsrA-binding protein (Wolbachia sp. subsp. Brugia malayi (strain TRS)).